The chain runs to 376 residues: tRNA-specific 2-thiouridylase MnmA (376 aa).

Residues 17-24 (GMSGGVDS) and Met-43 each bind ATP. The segment at 103 to 105 (NPD) is interaction with target base in tRNA. Cys-108 acts as the Nucleophile in catalysis. Cys-108 and Cys-204 are oxidised to a cystine. Gly-132 contacts ATP. An interaction with tRNA region spans residues 154–156 (KDQ). Cys-204 serves as the catalytic Cysteine persulfide intermediate. The interaction with tRNA stretch occupies residues 316–317 (RY).

It belongs to the MnmA/TRMU family.

It localises to the cytoplasm. The catalysed reaction is S-sulfanyl-L-cysteinyl-[protein] + uridine(34) in tRNA + AH2 + ATP = 2-thiouridine(34) in tRNA + L-cysteinyl-[protein] + A + AMP + diphosphate + H(+). Functionally, catalyzes the 2-thiolation of uridine at the wobble position (U34) of tRNA, leading to the formation of s(2)U34. This is tRNA-specific 2-thiouridylase MnmA from Pseudomonas syringae pv. syringae (strain B728a).